Reading from the N-terminus, the 98-residue chain is UPF0235 protein MJ0618 (98 aa).

This sequence belongs to the UPF0235 family.

The sequence is that of UPF0235 protein MJ0618 from Methanocaldococcus jannaschii (strain ATCC 43067 / DSM 2661 / JAL-1 / JCM 10045 / NBRC 100440) (Methanococcus jannaschii).